Here is a 200-residue protein sequence, read N- to C-terminus: uncharacterized protein (200 aa).

A helical membrane pass occupies residues 104–124; it reads SNLLICFLFLCGLYHISVFTG.

It is found in the membrane. This is an uncharacterized protein from Escherichia coli (strain K12).